A 350-amino-acid polypeptide reads, in one-letter code: MEDLQLVLFVLGAIAIVAVLVHGFWSIRKQQPRTIKEQPRTPYAMSPGRRDAEGFDADGIGEVRVRKLAPDDKKSEPVKASHDDTFSLSDEPKVRRVKERQEPVLESRADAAPNHAAHERRGHDFRHHEEPSPSARQVQLGLLDDLDQEPSQGELYEEINASVADYDDDYDAYENQPASVDRAEAARVPADQGQAAHSAATQAEPQAKAEEPLPDPRDVLVLHVVAREGQVLAGAELLPCLLELNFKYGDMEIFHRHEDNAGNGKVLFSLANMLKPGTFDPDTMEQFNTHGIVLFMTLPCHGEAVMNFSLMLNSACQLADDLDALVLDGQRQLWSDATKAQYLARIRANA.

Over 1-6 (MEDLQL) the chain is Periplasmic. Residues 7–27 (VLFVLGAIAIVAVLVHGFWSI) traverse the membrane as a helical segment. Residues 28–350 (RKQQPRTIKE…QYLARIRANA (323 aa)) are Cytoplasmic-facing. Disordered regions lie at residues 36–55 (KEQP…AEGF), 65–136 (VRKL…PSAR), and 187–213 (RVPA…EEPL). Basic and acidic residues-rich tracts occupy residues 65-109 (VRKL…ESRA) and 116-131 (AAHE…HEEP).

This sequence belongs to the ZipA family. In terms of assembly, interacts with FtsZ via their C-terminal domains.

Its subcellular location is the cell inner membrane. Its function is as follows. Essential cell division protein that stabilizes the FtsZ protofilaments by cross-linking them and that serves as a cytoplasmic membrane anchor for the Z ring. Also required for the recruitment to the septal ring of downstream cell division proteins. This chain is Cell division protein ZipA, found in Shewanella amazonensis (strain ATCC BAA-1098 / SB2B).